We begin with the raw amino-acid sequence, 387 residues long: Mannose-6-phosphate isomerase (387 aa).

It belongs to the N-acylglucosamine 2-epimerase family.

The enzyme catalyses D-mannose 6-phosphate = D-fructose 6-phosphate. The protein is Mannose-6-phosphate isomerase (pmi) of Rhizobium meliloti (strain 1021) (Ensifer meliloti).